The sequence spans 285 residues: Dioxygenase andF (285 aa).

Positions 128, 130, and 205 each coordinate Fe cation.

This sequence belongs to the PhyH family. As to quaternary structure, homodimer. The cofactor is Fe cation.

It participates in secondary metabolite biosynthesis; terpenoid biosynthesis. Dioxygenase; part of the gene cluster that mediates the biosynthesis of anditomin, a fungal meroterpenoid. The first step of the pathway is the synthesis of 3,5-dimethylorsellinic acid (DMOA) by the polyketide synthase andM. DMOA is then converted to the phthalide compound 5,7-dihydroxy-4,6-dimethylphthalide (DHDMP) by the cytochrome P450 monooxygenase andK, which is further prenylated by the prenyltransferase andD to yield farnesyl-DHDMP. Further epoxidation by the FAD-dependent monooxygenase andE leads to epoxyfarnesyl-DHDMP. The next step involves the terpene cyclase andB that converts epoxyfarnesyl-DHDMP into preandiloid A through opening of the epoxide ring followed by the cyclization of the farnesyl moiety. Preandiloid A is in turn oxidized at the C-3 hydroxyl group to yield preandiloid B by the dehydrogenase andC. The dioxygenase andA is solely responsible for the dehydrogenation of preandiloid B leading to the enone preandiloid C, as well as for the intriguing structural rearrangement to generate the bicyclo[2.2.2]octane core, transforming preandiloid C into andiconin. FAD-binding monooxygenase andJ then produces andilesin D which is reduced by dehydrogenase andI to yield andilesin A. Action of acetyltransferase andG followed by a spontaneous acetate elimination leads then to andilesin B, which is in turn substrate of the short chain dehydrogenase andH to yield andilesin C. Finally, the dioxygenase andF catalyzes the transformation of andilesin C to anditomin. This Emericella variicolor (Aspergillus stellatus) protein is Dioxygenase andF.